The chain runs to 287 residues: Ribosomal RNA small subunit methyltransferase I (287 aa).

It belongs to the methyltransferase superfamily. RsmI family.

Its subcellular location is the cytoplasm. The catalysed reaction is cytidine(1402) in 16S rRNA + S-adenosyl-L-methionine = 2'-O-methylcytidine(1402) in 16S rRNA + S-adenosyl-L-homocysteine + H(+). Catalyzes the 2'-O-methylation of the ribose of cytidine 1402 (C1402) in 16S rRNA. The chain is Ribosomal RNA small subunit methyltransferase I from Helicobacter pylori (strain ATCC 700392 / 26695) (Campylobacter pylori).